The following is a 179-amino-acid chain: Large ribosomal subunit protein uL5 (179 aa).

It belongs to the universal ribosomal protein uL5 family. In terms of assembly, part of the 50S ribosomal subunit; part of the 5S rRNA/L5/L18/L25 subcomplex. Contacts the 5S rRNA and the P site tRNA. Forms a bridge to the 30S subunit in the 70S ribosome.

In terms of biological role, this is one of the proteins that bind and probably mediate the attachment of the 5S RNA into the large ribosomal subunit, where it forms part of the central protuberance. In the 70S ribosome it contacts protein S13 of the 30S subunit (bridge B1b), connecting the 2 subunits; this bridge is implicated in subunit movement. Contacts the P site tRNA; the 5S rRNA and some of its associated proteins might help stabilize positioning of ribosome-bound tRNAs. The chain is Large ribosomal subunit protein uL5 from Cronobacter sakazakii (strain ATCC BAA-894) (Enterobacter sakazakii).